Reading from the N-terminus, the 1273-residue chain is DNA-directed RNA polymerase subunit beta (1273 aa).

The tract at residues 1252–1273 is disordered; the sequence is ADDQDLVVSSNDEEVSENDERS.

The protein belongs to the RNA polymerase beta chain family. As to quaternary structure, the RNAP catalytic core consists of 2 alpha, 1 beta, 1 beta' and 1 omega subunit. When a sigma factor is associated with the core the holoenzyme is formed, which can initiate transcription.

It catalyses the reaction RNA(n) + a ribonucleoside 5'-triphosphate = RNA(n+1) + diphosphate. Its function is as follows. DNA-dependent RNA polymerase catalyzes the transcription of DNA into RNA using the four ribonucleoside triphosphates as substrates. This is DNA-directed RNA polymerase subunit beta from Dehalococcoides mccartyi (strain CBDB1).